A 355-amino-acid polypeptide reads, in one-letter code: 3-dehydroquinate synthase (355 aa).

NAD(+) contacts are provided by residues 71 to 76 (EGEASK), 105 to 109 (GVVGD), 129 to 130 (TS), Lys-142, and Lys-151. Zn(2+) contacts are provided by Glu-184, His-246, and His-263.

It belongs to the sugar phosphate cyclases superfamily. Dehydroquinate synthase family. Requires Co(2+) as cofactor. The cofactor is Zn(2+). NAD(+) is required as a cofactor.

It is found in the cytoplasm. The enzyme catalyses 7-phospho-2-dehydro-3-deoxy-D-arabino-heptonate = 3-dehydroquinate + phosphate. It participates in metabolic intermediate biosynthesis; chorismate biosynthesis; chorismate from D-erythrose 4-phosphate and phosphoenolpyruvate: step 2/7. Functionally, catalyzes the conversion of 3-deoxy-D-arabino-heptulosonate 7-phosphate (DAHP) to dehydroquinate (DHQ). This chain is 3-dehydroquinate synthase, found in Streptococcus sanguinis (strain SK36).